We begin with the raw amino-acid sequence, 419 residues long: MHKLIIHGGTPLKGSINISGAKNAVLPIMAASILTDKLHITNVPKLTDVSTMKDLLRSHGADIEIIKHQDEFELIIDTKNINNFTADYEIVRKMRASIWVLGPLLTKYGKAKVSLPGGCAIGARQVDLHIAVLKAMGAEIEIEDGYINASSKGRLKGTHFVFDKVSVGATINAILVAVLAEGETVLFNCGREPEIVDLCNCLITMGADIAGIGTSEITIKGKDSLNKASYKVLSDRIEAGTYMFAAAITKGDVKICGIDYHIVENIALKLIETGIKVVPINNGVQVTYEGKLNSVDLETNPYPGFATDLQAQFMSLMTLSSGVSMITENIFENRFMHVPELCRMGADIVVRGNKAVVRGVEMLKGAEVMASDLRASVSLILAGLSTNSKTVLHRIYHLDRGFQDLEKKLSNCGADIKRV.

22-23 (KN) is a phosphoenolpyruvate binding site. Arg-95 serves as a coordination point for UDP-N-acetyl-alpha-D-glucosamine. Catalysis depends on Cys-119, which acts as the Proton donor. Position 119 is a 2-(S-cysteinyl)pyruvic acid O-phosphothioketal (Cys-119). UDP-N-acetyl-alpha-D-glucosamine contacts are provided by residues 164–167 (KVSV), Asp-308, and Ile-330.

It belongs to the EPSP synthase family. MurA subfamily.

It localises to the cytoplasm. The enzyme catalyses phosphoenolpyruvate + UDP-N-acetyl-alpha-D-glucosamine = UDP-N-acetyl-3-O-(1-carboxyvinyl)-alpha-D-glucosamine + phosphate. The protein operates within cell wall biogenesis; peptidoglycan biosynthesis. Cell wall formation. Adds enolpyruvyl to UDP-N-acetylglucosamine. This chain is UDP-N-acetylglucosamine 1-carboxyvinyltransferase, found in Rickettsia rickettsii (strain Iowa).